The sequence spans 765 residues: LPS-assembly protein LptD (765 aa).

Residues 1–18 (MQIRYLLALSLLPKLVLA) form the signal peptide.

The protein belongs to the LptD family. In terms of assembly, component of the lipopolysaccharide transport and assembly complex. Interacts with LptE and LptA.

The protein localises to the cell outer membrane. Its function is as follows. Together with LptE, is involved in the assembly of lipopolysaccharide (LPS) at the surface of the outer membrane. In Shewanella oneidensis (strain ATCC 700550 / JCM 31522 / CIP 106686 / LMG 19005 / NCIMB 14063 / MR-1), this protein is LPS-assembly protein LptD.